A 155-amino-acid chain; its full sequence is MTDQQAPVFQIQRVYLKEASLEQPNSPAILLEQESPTVDIQLGVNAAPVAEGVFEVTVTATVQTKIKDKTVFLVEATQAGIFEIRNLPQEQMNQIMGIACPQIVYPYLRGNVADLVQRGGFPPVHLSEINFQAMFEQQQQQQAGAGADAPQLVTQ.

The protein belongs to the SecB family. Homotetramer, a dimer of dimers. One homotetramer interacts with 1 SecA dimer.

Its subcellular location is the cytoplasm. One of the proteins required for the normal export of preproteins out of the cell cytoplasm. It is a molecular chaperone that binds to a subset of precursor proteins, maintaining them in a translocation-competent state. It also specifically binds to its receptor SecA. This is Protein-export protein SecB from Albidiferax ferrireducens (strain ATCC BAA-621 / DSM 15236 / T118) (Rhodoferax ferrireducens).